The primary structure comprises 156 residues: 6,7-dimethyl-8-ribityllumazine synthase (156 aa).

Residues Phe-23, 57–59, and 81–83 each bind 5-amino-6-(D-ribitylamino)uracil; these read AFE and AVI. Residue 86–87 coordinates (2S)-2-hydroxy-3-oxobutyl phosphate; the sequence is AT. His-89 serves as the catalytic Proton donor. Residue Phe-114 coordinates 5-amino-6-(D-ribitylamino)uracil. Arg-128 is a binding site for (2S)-2-hydroxy-3-oxobutyl phosphate.

This sequence belongs to the DMRL synthase family.

It catalyses the reaction (2S)-2-hydroxy-3-oxobutyl phosphate + 5-amino-6-(D-ribitylamino)uracil = 6,7-dimethyl-8-(1-D-ribityl)lumazine + phosphate + 2 H2O + H(+). Its pathway is cofactor biosynthesis; riboflavin biosynthesis; riboflavin from 2-hydroxy-3-oxobutyl phosphate and 5-amino-6-(D-ribitylamino)uracil: step 1/2. Functionally, catalyzes the formation of 6,7-dimethyl-8-ribityllumazine by condensation of 5-amino-6-(D-ribitylamino)uracil with 3,4-dihydroxy-2-butanone 4-phosphate. This is the penultimate step in the biosynthesis of riboflavin. This chain is 6,7-dimethyl-8-ribityllumazine synthase, found in Campylobacter concisus (strain 13826).